Reading from the N-terminus, the 240-residue chain is Probable transcriptional regulatory protein YrbC (240 aa).

It belongs to the TACO1 family.

The protein resides in the cytoplasm. The sequence is that of Probable transcriptional regulatory protein YrbC (yrbC) from Bacillus subtilis (strain 168).